The sequence spans 180 residues: Shikimate kinase (180 aa).

Residue 14 to 19 (GAGKSS) participates in ATP binding. S18 contributes to the Mg(2+) binding site. The substrate site is built by D36, R60, and G82. R120 lines the ATP pocket. R139 serves as a coordination point for substrate.

Belongs to the shikimate kinase family. Monomer. The cofactor is Mg(2+).

It is found in the cytoplasm. It carries out the reaction shikimate + ATP = 3-phosphoshikimate + ADP + H(+). It participates in metabolic intermediate biosynthesis; chorismate biosynthesis; chorismate from D-erythrose 4-phosphate and phosphoenolpyruvate: step 5/7. Catalyzes the specific phosphorylation of the 3-hydroxyl group of shikimic acid using ATP as a cosubstrate. The polypeptide is Shikimate kinase (Xylella fastidiosa (strain M12)).